A 643-amino-acid chain; its full sequence is U3 small nucleolar RNA-associated protein 5 (643 aa).

WD repeat units follow at residues 14–54 (GQYL…LYLE), 55–98 (DSKL…VTYK), 186–225 (GHVSPVSTLQVITNEFFISGAEGDRFLNVYDIHSGMTKCV), 227–266 (VAESDIKELSHSGQADSIAVTTEDGSLEIFVDPLVSSSTK), 340–389 (SADR…LEQE), and 471–511 (RLKP…IHGG). The interval 565–643 (HSSEPVVEED…EAGYSDVEME (79 aa)) is disordered. A compositionally biased stretch (acidic residues) spans 570-611 (VVEEDEDDVEYNEELDDAGLIEDGEESYGSEEEEEGDSDNEE). A compositionally biased stretch (basic and acidic residues) spans 612–626 (EQKHTSSKQDGRLET). Residues 627–643 (EQSDGEEEAGYSDVEME) are compositionally biased toward acidic residues.

The protein belongs to the UTP5 family. As to quaternary structure, interacts with snoRNA U3. Interacts with MPP10. Component of the ribosomal small subunit (SSU) processome composed of at least 40 protein subunits and snoRNA U3. In the absence of snoRNA3, forms a complex with other t-UTPs. This complex can associate with pre-18S ribosomal RNAs.

It is found in the nucleus. The protein localises to the nucleolus. In terms of biological role, involved in nucleolar processing of pre-18S ribosomal RNA. Required for optimal pre-ribosomal RNA transcription by RNA polymerase I together with a subset of U3 proteins required for transcription (t-UTPs). This Saccharomyces cerevisiae (strain ATCC 204508 / S288c) (Baker's yeast) protein is U3 small nucleolar RNA-associated protein 5 (UTP5).